Reading from the N-terminus, the 559-residue chain is Membrane protein insertase YidC (559 aa).

Transmembrane regions (helical) follow at residues 5-25 (IVNLVAAIVLSLGIIFGWQYF), 332-352 (AIDFGWFYIITKPVFYAMNFF), 355-375 (YVGNFGISILIVTVIIKLLMF), 429-449 (LPILVQIPVFFSIYKVLYVTI), 474-494 (LFGLLHFSLPSFLMIGAWPIL), and 520-540 (FMPLVFLVMFSSFPAGLLIYW).

Belongs to the OXA1/ALB3/YidC family. Type 1 subfamily. As to quaternary structure, interacts with the Sec translocase complex via SecD. Specifically interacts with transmembrane segments of nascent integral membrane proteins during membrane integration.

It is found in the cell inner membrane. Its function is as follows. Required for the insertion and/or proper folding and/or complex formation of integral membrane proteins into the membrane. Involved in integration of membrane proteins that insert both dependently and independently of the Sec translocase complex, as well as at least some lipoproteins. Aids folding of multispanning membrane proteins. The protein is Membrane protein insertase YidC of Rickettsia bellii (strain OSU 85-389).